Consider the following 359-residue polypeptide: MIVSSEAFLNLNINEILKFRKFLNIRVSKIVCYLRRQDLWLESGYKQAVKSPFNRSTEKFKIKYFDYYSKLSNWKQAFPEAEIIVRIYDRKLFPEGNVILDFLQALGIDMPEAREYKIEANPSLSHLSTLVMRRINEELNLSPQDRWKVVNYLLELDRREGSILKTFFTLEERIKFLEQFRESNEKLFREYFGTKNQFVLSEEEIEFYRQQDQIPREVIERAIEERYQKVLEFMKREGIMAKEKIFPKVNVNYLPEANLEFFRIDVLQANLLNGRLILSGLLLPKNAEGVKLTVKDAEGIKEIQWGLPSPIFGELHPDNPIAKNARFRVDNVVPDLEKPIEVFLNGEKVAEIIIDGSRG.

This is an uncharacterized protein from Archaeoglobus fulgidus (strain ATCC 49558 / DSM 4304 / JCM 9628 / NBRC 100126 / VC-16).